Reading from the N-terminus, the 325-residue chain is Phospholipid phosphatase-related protein type 1 (325 aa).

An N-linked (GlcNAc...) asparagine glycan is attached at Asn5. 3 consecutive transmembrane segments (helical) span residues 13–33 (IIPC…LLAY), 67–87 (FITP…IIFI), and 127–147 (FTGV…AGQV). Asn163 carries an N-linked (GlcNAc...) asparagine glycan. 3 helical membrane passes run 201–218 (AALS…ITST), 230–247 (VLCL…LNRV), and 257–277 (VIAG…CVVH). Ser307 bears the Phosphoserine mark. N-linked (GlcNAc...) asparagine glycosylation is present at Asn316.

It belongs to the PA-phosphatase related phosphoesterase family.

The protein localises to the cell membrane. It localises to the cell projection. It is found in the neuron projection. Functionally, may play a role in neurite outgrowth and neurogenesis. The sequence is that of Phospholipid phosphatase-related protein type 1 from Homo sapiens (Human).